A 129-amino-acid polypeptide reads, in one-letter code: Transmembrane protein 105 (129 aa).

The next 2 membrane-spanning stretches (helical) occupy residues 23–43 (AGNVIGQLIYLLTWSLFTAWL) and 94–114 (FLAGGLHLVPSSLSLAACGVV).

It localises to the membrane. This Homo sapiens (Human) protein is Transmembrane protein 105 (TMEM105).